The chain runs to 212 residues: UPF0319 protein PBPRA2789 (212 aa).

Positions 1–21 are cleaved as a signal peptide; it reads MKKILLAFTLPLVLASQTAMA.

The protein belongs to the UPF0319 family.

This Photobacterium profundum (strain SS9) protein is UPF0319 protein PBPRA2789.